The following is a 601-amino-acid chain: ATP-dependent lipid A-core flippase (601 aa).

One can recognise an ABC transmembrane type-1 domain in the interval 28-328 (LLSVVGLIVY…LTRVNAEFQR (301 aa)). 6 helical membrane-spanning segments follow: residues 32 to 52 (VGLIVYGLVDAAFISFIGPFI), 81 to 101 (VLLMAPIVVILMFSLRGFANF), 160 to 180 (ALISIVRDSVTIIGMLGLMFY), 183 to 203 (WKLSLCILVIGPIMGVVITIV), 267 to 287 (AVSQPLIMVIGSFALAFVLYA), and 296 to 316 (DLTAGTFATILGAMMAMLQPI). Residues 360-597 (LRFDNVSFSY…GGMYAKLYQM (238 aa)) enclose the ABC transporter domain. 394–401 (GRSGSGKS) is a binding site for ATP.

It belongs to the ABC transporter superfamily. Lipid exporter (TC 3.A.1.106) family. Homodimer.

Its subcellular location is the cell inner membrane. It carries out the reaction ATP + H2O + lipid A-core oligosaccharideSide 1 = ADP + phosphate + lipid A-core oligosaccharideSide 2.. Functionally, involved in lipopolysaccharide (LPS) biosynthesis. Translocates lipid A-core from the inner to the outer leaflet of the inner membrane. Transmembrane domains (TMD) form a pore in the inner membrane and the ATP-binding domain (NBD) is responsible for energy generation. The chain is ATP-dependent lipid A-core flippase from Shewanella oneidensis (strain ATCC 700550 / JCM 31522 / CIP 106686 / LMG 19005 / NCIMB 14063 / MR-1).